Here is a 198-residue protein sequence, read N- to C-terminus: MKQPSALSALVEALRVLPGVGPKSAQRMAVHLMQHDREGAERLGRSLLFATEHLQHCEKCNTFTEAQICEVCSDEERDPTLLCVVETPADQIMLEQTMTYRGLYFVLMGRLSPLDGIGPKEIHFDRLVRRASDGVVKEVVLATNFTNEGEATAHYLGQTLKARGLAVTRLARGVPVGGELEYVDAGTIARAMLDRRTM.

A C4-type zinc finger spans residues 57–72 (CEKCNTFTEAQICEVC). The region spanning 80–175 (TLLCVVETPA…AVTRLARGVP (96 aa)) is the Toprim domain.

Belongs to the RecR family.

Functionally, may play a role in DNA repair. It seems to be involved in an RecBC-independent recombinational process of DNA repair. It may act with RecF and RecO. The protein is Recombination protein RecR of Burkholderia cenocepacia (strain HI2424).